We begin with the raw amino-acid sequence, 655 residues long: Peroxidase skpo-1 (655 aa).

Residues Met-1 to Ser-19 form the signal peptide. The 35-residue stretch at Cys-22–Cys-56 folds into the ShKT domain. 4 disulfides stabilise this stretch: Cys-22–Cys-56, Cys-29–Cys-49, Cys-38–Cys-53, and Cys-133–Cys-150. The active-site Proton acceptor is the His-222. His-428 lines the heme b pocket. Cystine bridges form between Cys-520–Cys-576 and Cys-617–Cys-642.

The protein belongs to the peroxidase family. XPO subfamily. Requires heme b as cofactor. As to expression, exclusively expressed in hypodermis.

The catalysed reaction is 2 a phenolic donor + H2O2 = 2 a phenolic radical donor + 2 H2O. Its function is as follows. Involved in hypodermal immune response against some types of bacterial infection. Probably utilizes H(2)O(2) produced by the NADPH oxidase bli-3. May play a role in cuticule biosynthesis. This is Peroxidase skpo-1 from Caenorhabditis elegans.